The chain runs to 156 residues: SsrA-binding protein (156 aa).

It belongs to the SmpB family.

It is found in the cytoplasm. Functionally, required for rescue of stalled ribosomes mediated by trans-translation. Binds to transfer-messenger RNA (tmRNA), required for stable association of tmRNA with ribosomes. tmRNA and SmpB together mimic tRNA shape, replacing the anticodon stem-loop with SmpB. tmRNA is encoded by the ssrA gene; the 2 termini fold to resemble tRNA(Ala) and it encodes a 'tag peptide', a short internal open reading frame. During trans-translation Ala-aminoacylated tmRNA acts like a tRNA, entering the A-site of stalled ribosomes, displacing the stalled mRNA. The ribosome then switches to translate the ORF on the tmRNA; the nascent peptide is terminated with the 'tag peptide' encoded by the tmRNA and targeted for degradation. The ribosome is freed to recommence translation, which seems to be the essential function of trans-translation. The protein is SsrA-binding protein of Maricaulis maris (strain MCS10) (Caulobacter maris).